A 910-amino-acid polypeptide reads, in one-letter code: Potassium/sodium hyperpolarization-activated cyclic nucleotide-gated channel 1 (910 aa).

Residues 1–75 are disordered; the sequence is MEGGGKPNSA…PAGSFEDAEG (75 aa). The Cytoplasmic segment spans residues 1–131; sequence MEGGGKPNSA…WIIHPYSDFR (131 aa). A helical transmembrane segment spans residues 132-153; that stretch reads FYWDLIMLIMMVGNLVIIPVGI. The Extracellular portion of the chain corresponds to 154–162; sequence TFFTEQTTT. The helical transmembrane segment at 163 to 183 threads the bilayer; it reads PWIIFNVASDTVFLLDLIMNF. Residues 184–204 lie on the Cytoplasmic side of the membrane; the sequence is RTGTVNEDSSEIILDPKVIKM. A helical membrane pass occupies residues 205-225; that stretch reads NYLKSWFVVDFISSIPVDYIF. The Extracellular segment spans residues 226 to 249; sequence LIVEKGMDSEVYKTARALRIVRFT. The helical; Voltage-sensor transmembrane segment at 250–270 threads the bilayer; sequence KILSLLRLLRLSRLIRYIHQW. The Cytoplasmic portion of the chain corresponds to 271–284; the sequence is EEIFHMTYDLASAV. A helical membrane pass occupies residues 285–307; that stretch reads VRIFNLIGMMLLLCHWDGCLQFL. Over 308-333 the chain is Extracellular; sequence VPLLQDFPPDCWVSLNEMVNDSWGKQ. A glycan (N-linked (GlcNAc...) asparagine) is linked at N327. The pore-forming intramembrane region spans 334-355; sequence YSYALFKAMSHMLCIGYGAQAP. Residues 347 to 351 carry the Selectivity filter motif; that stretch reads CIGYG. At 356–360 the chain is on the extracellular side; that stretch reads VSMSD. A helical membrane pass occupies residues 361–381; sequence LWITMLSMIVGATCYAMFVGH. Over 382 to 910 the chain is Cytoplasmic; that stretch reads ATALIQSLDS…AEKPRFASNL (529 aa). 7 residues coordinate 3',5'-cyclic AMP: G528, E529, C531, R538, T539, R579, and R582. Disordered stretches follow at residues 634-681, 771-791, and 865-910; these read TALN…QPSA, QQQQ…VHKS, and QMSS…ASNL. The segment covering 639–680 has biased composition (low complexity); that stretch reads TSSTTTPTSRMRTQSPPVYTATSLSHSNLHSPSPSTQTPQPS. Over residues 780-791 the composition is skewed to polar residues; that stretch reads GSSTPKNEVHKS. Residues 875-885 are compositionally biased toward pro residues; it reads RGVPPAPPPPA. Over residues 900-910 the composition is skewed to basic and acidic residues; sequence DAEKPRFASNL.

The protein belongs to the potassium channel HCN family. As to quaternary structure, homotetramer. Heterotetramer with HCN2. The potassium channel is composed of a homo- or heterotetrameric complex of pore-forming subunits. Interacts with KCNE2. Interacts with the SH3 domain of CSK. In terms of processing, N-glycosylated. Predominantly expressed in brain. Highly expressed in apical dendrites of pyramidal neurons in the cortex, in the layer corresponding to the stratum lacunosum-moleculare in the hippocampus and in axons of basket cells in the cerebellum (at protein level). Expressed in a subset of elongated cells in taste buds.

It localises to the cell membrane. It carries out the reaction Na(+)(in) = Na(+)(out). The enzyme catalyses K(+)(in) = K(+)(out). With respect to regulation, activated by cAMP. cAMP binding causes a conformation change that leads to the assembly of an active tetramer and channel opening. Compared to other family members, cAMP has less stimulatory effect on HCN1 because part of the molecules already contain bound cAMP and form homotetramers when cAMP levels are low, this inherent tetramerization in HCN1 results in a weaker response to increased cAMP. Functionally, hyperpolarization-activated ion channel that are permeable to sodium and potassium ions. Exhibits weak selectivity for potassium over sodium ions. Contributes to the native pacemaker currents in heart (If) and in neurons (Ih). Participates in cerebellar mechanisms of motor learning. May mediate responses to sour stimuli. This chain is Potassium/sodium hyperpolarization-activated cyclic nucleotide-gated channel 1 (Hcn1), found in Mus musculus (Mouse).